A 469-amino-acid chain; its full sequence is Glutamate--tRNA ligase (469 aa).

The 'HIGH' region signature appears at 9–19 (PSPTGFLHVGG). Positions 98, 100, 125, and 127 each coordinate Zn(2+). Positions 236–240 (KLSKR) match the 'KMSKS' region motif. An ATP-binding site is contributed by Lys239.

This sequence belongs to the class-I aminoacyl-tRNA synthetase family. Glutamate--tRNA ligase type 1 subfamily. Monomer. It depends on Zn(2+) as a cofactor.

Its subcellular location is the cytoplasm. The enzyme catalyses tRNA(Glu) + L-glutamate + ATP = L-glutamyl-tRNA(Glu) + AMP + diphosphate. Catalyzes the attachment of glutamate to tRNA(Glu) in a two-step reaction: glutamate is first activated by ATP to form Glu-AMP and then transferred to the acceptor end of tRNA(Glu). The protein is Glutamate--tRNA ligase of Shewanella sp. (strain MR-4).